The primary structure comprises 151 residues: Small ribosomal subunit protein uS15 (151 aa).

Belongs to the universal ribosomal protein uS15 family.

This is Small ribosomal subunit protein uS15 (RPS13) from Pisum sativum (Garden pea).